We begin with the raw amino-acid sequence, 264 residues long: Small ribosomal subunit protein eS1 (264 aa).

Lysine 34 carries the N6-acetyllysine; alternate modification. Lysine 34 is covalently cross-linked (Glycyl lysine isopeptide (Lys-Gly) (interchain with G-Cter in SUMO2); alternate). Residue lysine 56 is modified to N6-acetyllysine. At tyrosine 155 the chain carries ADP-ribosyltyrosine. The segment at 232–264 (HGEGSSSGKATGDETGAKVERADGYEPPVQESV) is disordered. A phosphoserine mark is found at serine 236 and serine 237. Residues 242-255 (TGDETGAKVERADG) show a composition bias toward basic and acidic residues. Lysine 249 is subject to N6-acetyllysine; alternate. A Glycyl lysine isopeptide (Lys-Gly) (interchain with G-Cter in SUMO2); alternate cross-link involves residue lysine 249. Tyrosine 256 carries the phosphotyrosine modification. Residue serine 263 is modified to Phosphoserine.

Belongs to the eukaryotic ribosomal protein eS1 family. As to quaternary structure, component of the small ribosomal subunit. Mature ribosomes consist of a small (40S) and a large (60S) subunit. The 40S subunit contains about 33 different proteins and 1 molecule of RNA (18S). The 60S subunit contains about 49 different proteins and 3 molecules of RNA (28S, 5.8S and 5S). Identified in a IGF2BP1-dependent mRNP granule complex containing untranslated mRNAs. Binds with high affinity to IPO4. Interacts with DDIT3. Part of the small subunit (SSU) processome, composed of more than 70 proteins and the RNA chaperone small nucleolar RNA (snoRNA) U3. In terms of processing, ADP-ribosylated at Tyr-155 by PARP1 in presence of HPF1.

The protein resides in the cytoplasm. Its subcellular location is the nucleus. It is found in the nucleolus. Its function is as follows. Component of the small ribosomal subunit. The ribosome is a large ribonucleoprotein complex responsible for the synthesis of proteins in the cell. Part of the small subunit (SSU) processome, first precursor of the small eukaryotic ribosomal subunit. During the assembly of the SSU processome in the nucleolus, many ribosome biogenesis factors, an RNA chaperone and ribosomal proteins associate with the nascent pre-rRNA and work in concert to generate RNA folding, modifications, rearrangements and cleavage as well as targeted degradation of pre-ribosomal RNA by the RNA exosome. May play a role during erythropoiesis through regulation of transcription factor DDIT3. The sequence is that of Small ribosomal subunit protein eS1 from Bos taurus (Bovine).